Consider the following 222-residue polypeptide: L-cystine transport system permease protein TcyL (222 aa).

Over 1–22 (MQESIQLVIDSLPFLLKGAGYT) the chain is Periplasmic. One can recognise an ABC transmembrane type-1 domain in the interval 19-207 (AGYTLQLSIG…IMATVLSTLQ (189 aa)). Residues 23–43 (LQLSIGGMFFGLLLGFILALM) form a helical membrane-spanning segment. Residues 44 to 64 (RLSPIWPVRWLARFYISIFRG) are Cytoplasmic-facing. A helical transmembrane segment spans residues 65-85 (TPLIAQLFMIYYGLPQFGIEL). Topologically, residues 86-182 (DPIPSAMIGL…RQAQLITSRT (97 aa)) are periplasmic. A helical membrane pass occupies residues 183–203 (LEVFTMYLAASLIYWIMATVL). Residues 204 to 222 (STLQNHFENQLNRQEREPK) lie on the Cytoplasmic side of the membrane.

The protein belongs to the binding-protein-dependent transport system permease family. HisMQ subfamily. In terms of assembly, the complex is composed of two ATP-binding proteins (TcyN), two transmembrane proteins (TcyL) and a solute-binding protein (TcyJ).

The protein localises to the cell inner membrane. Functionally, part of the ABC transporter complex TcyJLN involved in L-cystine import. Responsible for the translocation of the substrate across the membrane. The chain is L-cystine transport system permease protein TcyL from Escherichia coli O6:H1 (strain CFT073 / ATCC 700928 / UPEC).